The chain runs to 201 residues: Nucleoside triphosphate pyrophosphatase (201 aa).

Residue Asp-77 is the Proton acceptor of the active site.

It belongs to the Maf family. It depends on a divalent metal cation as a cofactor.

It is found in the cytoplasm. It carries out the reaction a ribonucleoside 5'-triphosphate + H2O = a ribonucleoside 5'-phosphate + diphosphate + H(+). It catalyses the reaction a 2'-deoxyribonucleoside 5'-triphosphate + H2O = a 2'-deoxyribonucleoside 5'-phosphate + diphosphate + H(+). Functionally, nucleoside triphosphate pyrophosphatase. May have a dual role in cell division arrest and in preventing the incorporation of modified nucleotides into cellular nucleic acids. This Rickettsia akari (strain Hartford) protein is Nucleoside triphosphate pyrophosphatase.